A 290-amino-acid chain; its full sequence is MLRSGVIAKKVGMTRLFMEDGKQIPVTVLQLDKLQVVAKKTSDSDGYSAVQLGAGTAKAKRTSAPMRGVFAKASVEPKRKLVEFRVDADNLIEVGEEIIADHYFEGQFVDVTGTSIGKGFQGAMKRHNFGGLRASHGVSISHRSHGSTGQCQDPGRVFKGKKMAGHMGAARVTTQNLQIVRTDTDRGLIMIKGAVPGSKGGWVTVKDAVKKPFPENAILPAALASAAAEAAKQAEEAAAAAAAEAEAEAARLAEEQAAAEAESLAQAEAEIAAEGSDAAPEGDADKKDGE.

Position 152 is an N5-methylglutamine (Q152). The tract at residues A250–E290 is disordered. The span at E255–E274 shows a compositional bias: low complexity.

The protein belongs to the universal ribosomal protein uL3 family. Part of the 50S ribosomal subunit. Forms a cluster with proteins L14 and L19. Methylated by PrmB.

One of the primary rRNA binding proteins, it binds directly near the 3'-end of the 23S rRNA, where it nucleates assembly of the 50S subunit. This Jannaschia sp. (strain CCS1) protein is Large ribosomal subunit protein uL3.